We begin with the raw amino-acid sequence, 569 residues long: Isocitrate dehydrogenase kinase/phosphatase (569 aa).

Residues 316 to 322 (APGVRGM) and Lys337 contribute to the ATP site. Asp372 is a catalytic residue.

Belongs to the AceK family.

It is found in the cytoplasm. The enzyme catalyses L-seryl-[isocitrate dehydrogenase] + ATP = O-phospho-L-seryl-[isocitrate dehydrogenase] + ADP + H(+). Its function is as follows. Bifunctional enzyme which can phosphorylate or dephosphorylate isocitrate dehydrogenase (IDH) on a specific serine residue. This is a regulatory mechanism which enables bacteria to bypass the Krebs cycle via the glyoxylate shunt in response to the source of carbon. When bacteria are grown on glucose, IDH is fully active and unphosphorylated, but when grown on acetate or ethanol, the activity of IDH declines drastically concomitant with its phosphorylation. This chain is Isocitrate dehydrogenase kinase/phosphatase, found in Pseudomonas putida (strain W619).